The primary structure comprises 449 residues: Tubulin beta-6 chain (449 aa).

GTP contacts are provided by Q11, E69, S138, G142, T143, G144, N204, and N226. E69 lines the Mg(2+) pocket. The interval 425-449 is disordered; that stretch reads YQDATADDEGEYEEDEDEEEILDHE. The span at 429–449 shows a compositional bias: acidic residues; sequence TADDEGEYEEDEDEEEILDHE.

Belongs to the tubulin family. Dimer of alpha and beta chains. A typical microtubule is a hollow water-filled tube with an outer diameter of 25 nm and an inner diameter of 15 nM. Alpha-beta heterodimers associate head-to-tail to form protofilaments running lengthwise along the microtubule wall with the beta-tubulin subunit facing the microtubule plus end conferring a structural polarity. Microtubules usually have 13 protofilaments but different protofilament numbers can be found in some organisms and specialized cells. The cofactor is Mg(2+).

It localises to the cytoplasm. The protein localises to the cytoskeleton. Its function is as follows. Tubulin is the major constituent of microtubules, a cylinder consisting of laterally associated linear protofilaments composed of alpha- and beta-tubulin heterodimers. Microtubules grow by the addition of GTP-tubulin dimers to the microtubule end, where a stabilizing cap forms. Below the cap, tubulin dimers are in GDP-bound state, owing to GTPase activity of alpha-tubulin. This Arabidopsis thaliana (Mouse-ear cress) protein is Tubulin beta-6 chain (TUBB6).